A 283-amino-acid chain; its full sequence is Alpha-ketoglutarate-dependent taurine dioxygenase (283 aa).

Histidine 70, tyrosine 73, and asparagine 95 together coordinate taurine. Positions 99 and 101 each coordinate Fe cation. Valine 102 contacts taurine. Threonine 126 contacts 2-oxoglutarate. 3 positions are modified to 3-hydroxytryptophan; by autocatalysis: tryptophan 128, tryptophan 240, and tryptophan 248. Residue histidine 255 coordinates Fe cation. 2-oxoglutarate is bound by residues histidine 255, arginine 266, and arginine 270. Position 270 (arginine 270) interacts with taurine.

Belongs to the TfdA dioxygenase family. In terms of assembly, homodimer. Was later shown to be a homotetramer arranged as a dimer of two dimers. The cofactor is Fe(2+).

The enzyme catalyses taurine + 2-oxoglutarate + O2 = aminoacetaldehyde + sulfite + succinate + CO2 + H(+). Its pathway is organosulfur degradation; taurine degradation via aerobic pathway; aminoacetaldehyde and sulfite from taurine: step 1/1. With respect to regulation, activated by ascorbate and inhibited by divalent metal ions such as zinc, copper and cobalt. Its function is as follows. Catalyzes the alpha-ketoglutarate-dependent hydroxylation of taurine yielding sulfite and aminoacetaldehyde after decomposition of an unstable intermediate. Is required for the utilization of taurine (2-aminoethanesulfonate) as an alternative sulfur source for growth in the absence of sulfate. To a lesser extent, pentanesulfonate, 3-(N-morpholino)propanesulfonate and 1,3-dioxo-2-isoindolineethanesulfonate are also desulfonated by this enzyme in vitro; however, desulfonation by TauD of organosulfonates other than taurine seem to be of little or no importance for sulfur metabolism in vivo. This is Alpha-ketoglutarate-dependent taurine dioxygenase (tauD) from Escherichia coli (strain K12).